The chain runs to 316 residues: Protoheme IX farnesyltransferase (316 aa).

A run of 8 helical transmembrane segments spans residues 35–55, 56–76, 119–139, 156–176, 183–203, 229–246, 250–272, and 283–303; these read VMVLVIFTALVGMVVSQGHVQ, PAIGAISLLAIAVGAGASGCL, VVLGLAANLLAAALLAFTIVF, IVIGGAAGALPPVIGQAVVTG, LILFAIIFIWTPPHFWALALI, IVWYSLLLAPLGLVPVAL, GLVYAVVGLVGGLGMVAFSIRVL, and AAMGMFGFSILYLFALFSALL.

The protein belongs to the UbiA prenyltransferase family. Protoheme IX farnesyltransferase subfamily.

It is found in the cell inner membrane. The enzyme catalyses heme b + (2E,6E)-farnesyl diphosphate + H2O = Fe(II)-heme o + diphosphate. It participates in porphyrin-containing compound metabolism; heme O biosynthesis; heme O from protoheme: step 1/1. In terms of biological role, converts heme B (protoheme IX) to heme O by substitution of the vinyl group on carbon 2 of heme B porphyrin ring with a hydroxyethyl farnesyl side group. This chain is Protoheme IX farnesyltransferase, found in Methylobacterium radiotolerans (strain ATCC 27329 / DSM 1819 / JCM 2831 / NBRC 15690 / NCIMB 10815 / 0-1).